A 157-amino-acid chain; its full sequence is Crossover junction endodeoxyribonuclease RuvC (157 aa).

Residues aspartate 7, glutamate 70, and aspartate 142 contribute to the active site. Mg(2+)-binding residues include aspartate 7, glutamate 70, and aspartate 142.

This sequence belongs to the RuvC family. Homodimer which binds Holliday junction (HJ) DNA. The HJ becomes 2-fold symmetrical on binding to RuvC with unstacked arms; it has a different conformation from HJ DNA in complex with RuvA. In the full resolvosome a probable DNA-RuvA(4)-RuvB(12)-RuvC(2) complex forms which resolves the HJ. It depends on Mg(2+) as a cofactor.

The protein resides in the cytoplasm. It catalyses the reaction Endonucleolytic cleavage at a junction such as a reciprocal single-stranded crossover between two homologous DNA duplexes (Holliday junction).. Functionally, the RuvA-RuvB-RuvC complex processes Holliday junction (HJ) DNA during genetic recombination and DNA repair. Endonuclease that resolves HJ intermediates. Cleaves cruciform DNA by making single-stranded nicks across the HJ at symmetrical positions within the homologous arms, yielding a 5'-phosphate and a 3'-hydroxyl group; requires a central core of homology in the junction. The consensus cleavage sequence is 5'-(A/T)TT(C/G)-3'. Cleavage occurs on the 3'-side of the TT dinucleotide at the point of strand exchange. HJ branch migration catalyzed by RuvA-RuvB allows RuvC to scan DNA until it finds its consensus sequence, where it cleaves and resolves the cruciform DNA. In Synechococcus sp. (strain RCC307), this protein is Crossover junction endodeoxyribonuclease RuvC.